The chain runs to 281 residues: Diphthine methyl ester synthase (281 aa).

Residues leucine 9, aspartate 84, glycine 87, 112-113 (SI), and leucine 163 each bind S-adenosyl-L-methionine. Serine 171 is modified (phosphoserine). Valine 225 and histidine 250 together coordinate S-adenosyl-L-methionine.

This sequence belongs to the diphthine synthase family.

It catalyses the reaction 2-[(3S)-amino-3-carboxypropyl]-L-histidyl-[translation elongation factor 2] + 4 S-adenosyl-L-methionine = diphthine methyl ester-[translation elongation factor 2] + 4 S-adenosyl-L-homocysteine + 3 H(+). Its pathway is protein modification; peptidyl-diphthamide biosynthesis. Its function is as follows. S-adenosyl-L-methionine-dependent methyltransferase that catalyzes four methylations of the modified target histidine residue in translation elongation factor 2 (EF-2), to form an intermediate called diphthine methyl ester. The four successive methylation reactions represent the second step of diphthamide biosynthesis. The protein is Diphthine methyl ester synthase (Dph5) of Mus musculus (Mouse).